Here is a 131-residue protein sequence, read N- to C-terminus: Protein yippee-like PJ691.02 (131 aa).

The 98-residue stretch at arginine 12–arginine 109 folds into the Yippee domain. Residues cysteine 16, cysteine 19, cysteine 72, and cysteine 75 each coordinate Zn(2+).

The protein belongs to the yippee family.

The sequence is that of Protein yippee-like PJ691.02 from Schizosaccharomyces pombe (strain 972 / ATCC 24843) (Fission yeast).